The sequence spans 717 residues: MTSSTPLYDENEDYIDENHINTFAKALLWEDDDHDGLASPPLPAYEGDKLAEVNAEELSSVLTPEPNNESEKSRPEFVVSHNDWYPINAPEKSKAKADAKGRKKRASTRDEFRSSAAYTLLRWPFLIIITVWILLLCILYTVVRAYVALSEYMLTWVGERKVLRNKLRASKTYEEWIENALELDRYLHLDKWSSIPRFSYYDYRTVKRTTSKLRMLRMRGMDEELMVFLQGCLKKNFAGIENRQLYAHRYYGTKNVVHVYIDEVVASIDHVTESENITPEDKRRFFRSVSRNYGRTALCLSGGACFAYTHFGIVKALLDNDLLPSIITGTSGGGLVAALACTRTDDELKQLLVPRLARKITACEDPWYVWIPRWWRTGARFDSTAWARKSNYFTLGSLTFQEAYHRTGRRLNISTVPADPHSPVILCNNITAPNCIIWSCLLASSAVPGILNPVVLMMKDSKKNTIVPFSLGSKWKDGSLRTDIPIDALKTYYNVNFTVVSQVNPHISLFFFAPKGSVGRPVASSRRKTRREKYASLRGGFIATALEHLFKLEIKKWLEMIKTLDLLPRLSESDWSSIWLQRFTGSITIWPRNNFRDFWYILSDPSEEGLGEMIRKGERYMFPKILFLKHRLSIENAIERGRTKSKLSTAHLEHSPRFSGTPEFAGPEFQLQTVHYDDDYDSESSAEETLSPGFSQGTHAVLTDESDDDSSDDEIDD.

Residues 123 to 143 (WPFLIIITVWILLLCILYTVV) form a helical membrane-spanning segment. The PNPLA domain maps to 298–490 (LCLSGGACFA…RTDIPIDALK (193 aa)). The short motif at 329–333 (GTSGG) is the GXSXG element. Catalysis depends on Ser331, which acts as the Nucleophile. The Proton acceptor role is filled by Asp477. The disordered stretch occupies residues 680-717 (YDSESSAEETLSPGFSQGTHAVLTDESDDDSSDDEIDD). Over residues 704-717 (DESDDDSSDDEIDD) the composition is skewed to acidic residues.

Belongs to the PLPL family.

The protein localises to the membrane. Probable lipid hydrolase. This Meyerozyma guilliermondii (strain ATCC 6260 / CBS 566 / DSM 6381 / JCM 1539 / NBRC 10279 / NRRL Y-324) (Yeast) protein is Patatin-like phospholipase domain-containing protein PGUG_03164.